Reading from the N-terminus, the 378-residue chain is Copper-containing nitrite reductase (378 aa).

Residues 1–38 constitute a signal peptide (tat-type signal); the sequence is MTEQLQMTRRTMLAGAALAGAVAPLLHTAQAHAAGAAA. 2 consecutive Plastocyanin-like domains span residues 39 to 213 and 214 to 378; these read AAGA…YDKI and YYVG…PASM. Positions 133, 138, 173, 174, 183, 188, and 344 each coordinate Cu cation.

Belongs to the multicopper oxidase family. As to quaternary structure, homotrimer. The cofactor is Cu(+). Cu(2+) serves as cofactor. Requires FAD as cofactor. Post-translationally, predicted to be exported by the Tat system. The position of the signal peptide cleavage has been experimentally proven.

Its subcellular location is the periplasm. It carries out the reaction nitric oxide + Fe(III)-[cytochrome c] + H2O = Fe(II)-[cytochrome c] + nitrite + 2 H(+). The protein operates within nitrogen metabolism; nitrate reduction (denitrification); dinitrogen from nitrate: step 2/4. The protein is Copper-containing nitrite reductase (nirK) of Achromobacter cycloclastes.